Reading from the N-terminus, the 120-residue chain is Large ribosomal subunit protein uL18 (120 aa).

The protein belongs to the universal ribosomal protein uL18 family. Part of the 50S ribosomal subunit; part of the 5S rRNA/L5/L18/L25 subcomplex. Contacts the 5S and 23S rRNAs.

Its function is as follows. This is one of the proteins that bind and probably mediate the attachment of the 5S RNA into the large ribosomal subunit, where it forms part of the central protuberance. This chain is Large ribosomal subunit protein uL18, found in Bradyrhizobium sp. (strain ORS 278).